A 690-amino-acid chain; its full sequence is Polyribonucleotide nucleotidyltransferase (690 aa).

Asp-483 and Asp-489 together coordinate Mg(2+). The 60-residue stretch at 550–609 (PKMEQITVDKKDIAAVIGKGGATIREIVEKSGAKLDVNDEGVVTVAAPDEESRNIAMQMI) folds into the KH domain. Positions 619–686 (NKIYSGKVMK…DRGKVKLSMK (68 aa)) constitute an S1 motif domain.

It belongs to the polyribonucleotide nucleotidyltransferase family. Requires Mg(2+) as cofactor.

The protein resides in the cytoplasm. The enzyme catalyses RNA(n+1) + phosphate = RNA(n) + a ribonucleoside 5'-diphosphate. In terms of biological role, involved in mRNA degradation. Catalyzes the phosphorolysis of single-stranded polyribonucleotides processively in the 3'- to 5'-direction. In Pelagibacter ubique (strain HTCC1062), this protein is Polyribonucleotide nucleotidyltransferase.